Here is a 707-residue protein sequence, read N- to C-terminus: Keratin, type II cytoskeletal 2 epidermal (707 aa).

A disordered region spans residues 1–20; that stretch reads MSCQISCRSRRGGGGGGGGG. Residues 1 to 198 are head; it reads MSCQISCRSR…DPEIQNVKSQ (198 aa). Arg-22 is modified (asymmetric dimethylarginine). Residues Ser-25 and Ser-28 each carry the phosphoserine modification. The span at 29–38 shows a compositional bias: low complexity; that stretch reads AVVSGGSRRS. The segment at 29–59 is disordered; the sequence is AVVSGGSRRSNTSFSCISRHGGGRGGSGGGG. An Omega-N-methylarginine modification is found at Arg-52. Ser-64 is modified (phosphoserine). The interval 199-234 is coil 1A; the sequence is EREQIKTLNNKFASFIDKVRFLEQQNQVLRTKWELL. Residues 199–512 enclose the IF rod domain; the sequence is EREQIKTLNN…KLLEGEECRM (314 aa). The tract at residues 235–253 is linker 1; it reads QQLDVGSRTTNLDPIFQAY. The tract at residues 254 to 345 is coil 1B; that stretch reads IGMLKKQVDR…TLYDAELSQL (92 aa). A linker 12 region spans residues 346–369; that stretch reads QQDVTDTNVILSMDNNRNLDLDSI. Positions 370–508 are coil 2; the sequence is IAEVQNQYEM…ATYRKLLEGE (139 aa). The interval 509–707 is tail; the sequence is ECRMSGDFSD…CGSGVTFSFR (199 aa). The disordered stretch occupies residues 531 to 707; sequence SSVASKTGFG…CGSGVTFSFR (177 aa). Positions 539 to 700 are enriched in gly residues; sequence FGSGGQSSGG…GSGSGEGCGS (162 aa). Residues Arg-555, Arg-593, Arg-607, and Arg-675 each carry the omega-N-methylarginine modification.

Belongs to the intermediate filament family. In terms of assembly, heterotetramer of two type I and two type II keratins. Associates with KRT10. As to expression, expressed predominantly in the suprabasal layers of the plantar epidermis outside of the footpads (at protein level). Expressed in the suprabasal layers of the interfollicular epidermis of the ear, in the interscale regions distant from the hair follicles in the tail, and in the soles of the footpads (at protein level). Expressed mainly in the middle spinous and granular cells of the epidermis of adult tail, nipple and footsole skin. Also found in ear.

Its subcellular location is the cytoplasm. Probably contributes to terminal cornification. Associated with keratinocyte activation, proliferation and keratinization. Required for maintenance of corneocytes and keratin filaments in suprabasal keratinocytes in the epidermis of the ear, potentially via moderation of expression and localization of keratins and their partner proteins. Plays a role in the establishment of the epidermal barrier on plantar skin. The chain is Keratin, type II cytoskeletal 2 epidermal from Mus musculus (Mouse).